The primary structure comprises 1188 residues: Carboxylic acid reductase (1188 aa).

Residues His315, Ser408, 429-430, Thr434, Asp507, 519-522, Lys528, and Lys629 contribute to the AMP site; these read DG and YVDR. In terms of domain architecture, Carrier spans 665-743; the sequence is AGERPVIETV…SVAAHIEKER (79 aa). Ser702 is subject to O-(pantetheine 4'-phosphoryl)serine. NADP(+) contacts are provided by residues 801–804, Arg828, Arg838, 868–869, 894–896, Ser934, Tyr970, Lys974, and Ser997; these read NGWL, DF, and SGA.

Belongs to the ATP-dependent AMP-binding enzyme family. Carboxylic acid reductase subfamily. Requires pantetheine 4'-phosphate as cofactor.

It catalyses the reaction a carboxylate + ATP + NADPH + H(+) = an aldehyde + AMP + diphosphate + NADP(+). Its function is as follows. Catalyzes the ATP- and NADPH-dependent reduction of carboxylic acids to the corresponding aldehydes. Catalyzes the reduction of a very wide range of carboxylic acids, including benzoic acids, heterocyclic, phenylacetic, phenylpropanoic and fatty acid substrates. The sequence is that of Carboxylic acid reductase from Segniliparus rugosus (strain ATCC BAA-974 / DSM 45345 / CCUG 50838 / CIP 108380 / JCM 13579 / CDC 945).